A 320-amino-acid polypeptide reads, in one-letter code: ATP-dependent 6-phosphofructokinase (320 aa).

Gly12 contributes to the ATP binding site. Residues 22–26 (RGVVR) and 55–60 (RYSVSD) each bind ADP. Residues 73–74 (RF) and 103–106 (GDGS) each bind ATP. Position 104 (Asp104) interacts with Mg(2+). Substrate is bound at residue 126 to 128 (TID). The Proton acceptor role is filled by Asp128. Arg155 serves as a coordination point for ADP. Residues Arg163 and 170–172 (MGR) each bind substrate. Residues 186–188 (GCE), Lys212, and 214–216 (KKH) each bind ADP. Residues Glu223, Arg244, and 250 to 253 (HIQR) each bind substrate.

The protein belongs to the phosphofructokinase type A (PFKA) family. ATP-dependent PFK group I subfamily. Prokaryotic clade 'B1' sub-subfamily. Homotetramer. Requires Mg(2+) as cofactor.

The protein localises to the cytoplasm. It carries out the reaction beta-D-fructose 6-phosphate + ATP = beta-D-fructose 1,6-bisphosphate + ADP + H(+). It participates in carbohydrate degradation; glycolysis; D-glyceraldehyde 3-phosphate and glycerone phosphate from D-glucose: step 3/4. Allosterically activated by ADP and other diphosphonucleosides, and allosterically inhibited by phosphoenolpyruvate. Its function is as follows. Catalyzes the phosphorylation of D-fructose 6-phosphate to fructose 1,6-bisphosphate by ATP, the first committing step of glycolysis. This Klebsiella pneumoniae (strain 342) protein is ATP-dependent 6-phosphofructokinase.